Here is a 395-residue protein sequence, read N- to C-terminus: MGILGLSKLLYDKSPNAIREQELKNFFGRRIAVDASMSIYQFIIAMKGFQDGQGLELTNEKGDVTSHLNGLFARTLRMIDEGIKPIYVFDGKPPKLKADELEMRRQKAAEAERAFEKAKDAGDDEMMEKMSKRTVRVSRDQIDESKKLLRLMGIPVIQAPSEAEAQCAELVKKGKAWAVGTEDMDALTFGSTVMLRHLNISDAKKRPIVEIHLDEVLQTTGLSMDQFVDLCILLGCDYVPKVPGIGPQKAWEGIQRYGSIESFLESLDTTKHPVPADFYYKEARAFFQNPEVTRAEEIDIQFSEPDEVGLIQFLVKEKLFNPDRVNKGIARLRAAFTRKTQGRLDSFFTITKVPQQTAAARAPLVGTKRPRDGKYVHVSGTLRKATSGHKKAVKK.

The N-domain stretch occupies residues 1 to 108; that stretch reads MGILGLSKLL…DELEMRRQKA (108 aa). Asp34 lines the Mg(2+) pocket. Arg74 serves as a coordination point for DNA. Asp90 contributes to the Mg(2+) binding site. A disordered region spans residues 116–136; the sequence is EKAKDAGDDEMMEKMSKRTVR. The I-domain stretch occupies residues 126-257; that stretch reads MMEKMSKRTV…QKAWEGIQRY (132 aa). Residues Glu162, Glu164, Asp183, and Asp185 each contribute to the Mg(2+) site. DNA is bound at residue Glu162. DNA-binding residues include Gly235 and Asp237. Asp237 is a Mg(2+) binding site. An interaction with PCNA region spans residues 340–348; it reads TQGRLDSFF.

The protein belongs to the XPG/RAD2 endonuclease family. FEN1 subfamily. In terms of assembly, interacts with PCNA. Three molecules of FEN1 bind to one PCNA trimer with each molecule binding to one PCNA monomer. PCNA stimulates the nuclease activity without altering cleavage specificity. Requires Mg(2+) as cofactor. In terms of processing, phosphorylated. Phosphorylation upon DNA damage induces relocalization to the nuclear plasma.

Its subcellular location is the nucleus. It localises to the nucleolus. It is found in the nucleoplasm. The protein localises to the mitochondrion. Structure-specific nuclease with 5'-flap endonuclease and 5'-3' exonuclease activities involved in DNA replication and repair. During DNA replication, cleaves the 5'-overhanging flap structure that is generated by displacement synthesis when DNA polymerase encounters the 5'-end of a downstream Okazaki fragment. It enters the flap from the 5'-end and then tracks to cleave the flap base, leaving a nick for ligation. Also involved in the long patch base excision repair (LP-BER) pathway, by cleaving within the apurinic/apyrimidinic (AP) site-terminated flap. Acts as a genome stabilization factor that prevents flaps from equilibrating into structures that lead to duplications and deletions. Also possesses 5'-3' exonuclease activity on nicked or gapped double-stranded DNA, and exhibits RNase H activity. Also involved in replication and repair of rDNA and in repairing mitochondrial DNA. The chain is Flap endonuclease 1 from Leishmania major.